A 115-amino-acid polypeptide reads, in one-letter code: uncharacterized protein (115 aa).

This is an uncharacterized protein from Rickettsia prowazekii (strain Madrid E).